The following is a 204-amino-acid chain: Methyl-CpG-binding domain-containing protein 1 (204 aa).

Residues 1–46 (MLPFPAMNLKKSRSENSSVASSGSKIEEQTEKSAEPTTIKVQKKAG) form a disordered region. Over residues 15 to 24 (ENSSVASSGS) the composition is skewed to polar residues. Residues 25-34 (KIEEQTEKSA) are compositionally biased toward basic and acidic residues. The CW-type zinc finger occupies 49 to 104 (GRSIDVFAVQCEKCMKWRKIDTQDEYEDIRSRVQEDPFFCKTKEGVSCEDVGDLNY). Positions 58–96 (QCEKCMKWRKIDTQDEYEDIRSRVQEDPFFCKTKEGVSC) match the MBD-associated domain (MAD) motif. Zn(2+)-binding residues include cysteine 59, cysteine 62, cysteine 88, and cysteine 96. The MBD domain occupies 110–180 (WVIDKPGLPR…GDFNFTVPKV (71 aa)).

In terms of tissue distribution, mostly expressed in flowers and buds.

Its subcellular location is the nucleus. Functionally, probable transcriptional regulator. The protein is Methyl-CpG-binding domain-containing protein 1 (MBD1) of Arabidopsis thaliana (Mouse-ear cress).